Consider the following 188-residue polypeptide: Protein SYC1 (188 aa).

In terms of assembly, component of the cleavage and polyadenylation factor (CPF) complex, which is composed of at least PTI1, SYC1, SSU72, GLC7, MPE1, REF2, PFS2, PTA1, YSH1/BRR5, SWD2, CFT2/YDH1, YTH1, CFT1/YHH1, FIP1 and PAP1. Component of the APT complex, which is a subcomplex of CPF, and is composed of PTI1, SYC1, SSU72, GLC7, REF2, PTA1 and SWD2.

It localises to the nucleus. In terms of biological role, component of the cleavage and polyadenylation factor (CPF) complex, which plays a key role in polyadenylation-dependent pre-mRNA 3'-end formation and cooperates with cleavage factors including the CFIA complex and NAB4/CFIB. Component of the APT complex, which may be involved in polyadenylation-independent transcript 3'-end formation, including snoRNAs and snRNAs. The polypeptide is Protein SYC1 (SYC1) (Saccharomyces cerevisiae (strain ATCC 204508 / S288c) (Baker's yeast)).